Here is a 212-residue protein sequence, read N- to C-terminus: Anaphase-promoting complex subunit 10 (212 aa).

A DOC domain is found at 12–196 (MDEEERTSSR…PSAVLEARPG (185 aa)).

This sequence belongs to the APC10 family. As to quaternary structure, the APC/C complex is probably composed of at least 12 subunits: apc-2, apc-10, apc-11, cdc-26, emb-1, emb-27, emb-30, mat-1, mat-2, mat-3, such-1 and gfi-3.

It functions in the pathway protein modification; protein ubiquitination. Functionally, probable component of the anaphase promoting complex/cyclosome (APC/C), a cell cycle-regulated E3 ubiquitin ligase that controls progression through mitosis and the G1 phase of the cell cycle. The APC/C complex acts by mediating ubiquitination and subsequent degradation of target proteins. The chain is Anaphase-promoting complex subunit 10 from Caenorhabditis elegans.